The sequence spans 396 residues: Activity-regulated cytoskeleton-associated protein (396 aa).

Positions Ser54–Tyr78 form a coiled coil. Positions Lys89–Glu100 are interaction with SH3GL1 or SH3GL3. Positions Pro177–Pro207 are disordered. Residues Gln195 to Phe214 form an interaction with DNM2 region. Ser260 is subject to Phosphoserine; by CaMK2. Glycyl lysine isopeptide (Lys-Gly) (interchain with G-Cter in ubiquitin) cross-links involve residues Lys268 and Lys269. At Thr278 the chain carries Phosphothreonine. The interval Gln356–Glu396 is disordered. The span at Ala382–Glu396 shows a compositional bias: polar residues.

Belongs to the ARC/ARG3.1 family. In terms of assembly, homooligomer; homooligomerizes into virion-like capsids. Interacts with SH3GL1/endophilin-2, SH3GL3/endophilin-3 and DNM2/DYN2. Interacts with CAMK2B (in the kinase inactive state); leading to target ARC to inactive synapses. Interacts with PSEN1. Interacts with GRIN2A and GRIN2B; inhibiting homooligomerization. Post-translationally, ubiquitinated by UBE3A, leading to its degradation by the proteasome, thereby promoting AMPA receptors (AMPARs) expression at synapses. Ubiquitinated by RNF216 at Lys-268 and Lys-269 limiting ARC protein levels induced by synaptic activity and thus regulating ARC-dependent forms of synaptic plasticity. Palmitoylation anchors the protein into the membrane by allowing direct insertion into the hydrophobic core of the lipid bilayer. In terms of processing, phosphorylation at Ser-260 by CaMK2 prevents homooligomerization into virion-like capsids by disrupting an interaction surface essential for high-order oligomerization. Phosphorylation by CaMK2 inhibits synaptic activity. As to expression, expressed in brain and testis. In primary visual cortex, detected in all cortical layers with the exception of layer 5: present at highest level in layers 2/3 and 4, the predominant sites of ocular dominance plasticity (at protein level). Also expressed in skin-migratory dendritic cells.

The protein localises to the extracellular vesicle membrane. It is found in the postsynaptic cell membrane. It localises to the synapse. Its subcellular location is the postsynaptic density. The protein resides in the early endosome membrane. The protein localises to the cell projection. It is found in the dendrite. It localises to the cytoplasm. Its subcellular location is the cytoskeleton. The protein resides in the cell cortex. The protein localises to the dendritic spine. It is found in the cytoplasmic vesicle. It localises to the secretory vesicle. Its subcellular location is the acrosome. The protein resides in the clathrin-coated vesicle membrane. Its function is as follows. Master regulator of synaptic plasticity that self-assembles into virion-like capsids that encapsulate RNAs and mediate intercellular RNA transfer in the nervous system. ARC protein is released from neurons in extracellular vesicles that mediate the transfer of ARC mRNA into new target cells, where ARC mRNA can undergo activity-dependent translation. ARC capsids are endocytosed and are able to transfer ARC mRNA into the cytoplasm of neurons. Acts as a key regulator of synaptic plasticity: required for protein synthesis-dependent forms of long-term potentiation (LTP) and depression (LTD) and for the formation of long-term memory. Regulates synaptic plasticity by promoting endocytosis of AMPA receptors (AMPARs) in response to synaptic activity: this endocytic pathway maintains levels of surface AMPARs in response to chronic changes in neuronal activity through synaptic scaling, thereby contributing to neuronal homeostasis. Acts as a postsynaptic mediator of activity-dependent synapse elimination in the developing cerebellum by mediating elimination of surplus climbing fiber synapses. Accumulates at weaker synapses, probably to prevent their undesired enhancement. This suggests that ARC-containing virion-like capsids may be required to eliminate synaptic material. Required to transduce experience into long-lasting changes in visual cortex plasticity and for long-term memory. Involved in postsynaptic trafficking and processing of amyloid-beta A4 (APP) via interaction with PSEN1. In addition to its role in synapses, also involved in the regulation of the immune system: specifically expressed in skin-migratory dendritic cells and regulates fast dendritic cell migration, thereby regulating T-cell activation. The polypeptide is Activity-regulated cytoskeleton-associated protein (Mus musculus (Mouse)).